Consider the following 311-residue polypeptide: MSKILVFGHQNPDSDAIGSSVAFAYLAKEAYGLDTEAVALGTPNEETAFVLNYFGVEAPRVITSAKAEGAEQVILTDHNEFQQSVSDIAEVEVYGVVDHHRVANFETASPLYMRLEPVGSASSIVYRMFKEHGVAVPKEIAGLMLSGLISDTLLLKSPTTHPTDKIIAPELAELAGVNLEEYGLAMLKAGTNLASKSAEELIDIDAKTFELNGNNVRVAQVNTVDIAEVLERQAEIEAAMQAANESNGYSDFVLMITDIVNSNSEILALGANMDKVEAAFNFKLENNHAFLAGAVSRKKQVVPQLTESFNA.

Mn(2+) is bound by residues His9, Asp13, Asp15, Asp77, His99, and Asp151.

This sequence belongs to the PPase class C family. Mn(2+) serves as cofactor.

It is found in the cytoplasm. The catalysed reaction is diphosphate + H2O = 2 phosphate + H(+). This Streptococcus pneumoniae (strain JJA) protein is Probable manganese-dependent inorganic pyrophosphatase.